A 284-amino-acid polypeptide reads, in one-letter code: D-tagatose-1,6-bisphosphate aldolase subunit GatY (284 aa).

Asp-82 (proton donor) is an active-site residue. Zn(2+) contacts are provided by His-83 and His-180. Residue Cys-181 participates in dihydroxyacetone phosphate binding. His-208 is a Zn(2+) binding site. Dihydroxyacetone phosphate is bound by residues 209-211 (GAS) and 230-233 (NVAT).

Belongs to the class II fructose-bisphosphate aldolase family. TagBP aldolase GatY subfamily. Forms a complex with GatZ. Zn(2+) is required as a cofactor.

It carries out the reaction D-tagatofuranose 1,6-bisphosphate = D-glyceraldehyde 3-phosphate + dihydroxyacetone phosphate. It participates in carbohydrate metabolism; D-tagatose 6-phosphate degradation; D-glyceraldehyde 3-phosphate and glycerone phosphate from D-tagatose 6-phosphate: step 2/2. In terms of biological role, catalytic subunit of the tagatose-1,6-bisphosphate aldolase GatYZ, which catalyzes the reversible aldol condensation of dihydroxyacetone phosphate (DHAP or glycerone-phosphate) with glyceraldehyde 3-phosphate (G3P) to produce tagatose 1,6-bisphosphate (TBP). Requires GatZ subunit for full activity and stability. Is involved in the catabolism of galactitol. In Salmonella paratyphi A (strain ATCC 9150 / SARB42), this protein is D-tagatose-1,6-bisphosphate aldolase subunit GatY.